The following is a 325-amino-acid chain: Nod factor export ATP-binding protein I (325 aa).

One can recognise an ABC transporter domain in the interval 27–257; it reads LELRKVRKQY…QIGCDVVEVY (231 aa). 59–66 is an ATP binding site; sequence GPNGAGKT.

It belongs to the ABC transporter superfamily. Lipooligosaccharide exporter (TC 3.A.1.102) family. As to quaternary structure, the complex is composed of two ATP-binding proteins (NodI) and two transmembrane proteins (NodJ).

It is found in the cell inner membrane. Its function is as follows. Part of the ABC transporter complex NodIJ involved in the export of the nodulation factors (Nod factors), the bacterial signal molecules that induce symbiosis and subsequent nodulation induction. Nod factors are LCO (lipo-chitin oligosaccharide), a modified beta-1,4-linked N-acetylglucosamine oligosaccharide. This subunit is responsible for energy coupling to the transport system. This is Nod factor export ATP-binding protein I from Cupriavidus pinatubonensis (strain JMP 134 / LMG 1197) (Cupriavidus necator (strain JMP 134)).